The primary structure comprises 673 residues: UvrABC system protein B (673 aa).

Residues 25–413 form the Helicase ATP-binding domain; sequence EGIESGLAHQ…GSDIAEQVVR (389 aa). An ATP-binding site is contributed by 38 to 45; it reads GVTGSGKT. The Beta-hairpin motif lies at 91-114; the sequence is YYDYYQPEAYVPTTDTFIEKDASV. Residues 430 to 583 form the Helicase C-terminal domain; the sequence is QVDDLLSEIN…QHQYNLDNNI (154 aa). Residues 634–669 enclose the UVR domain; the sequence is DTKIVELEKLMQGHAQNLEFEQAAAMRDKIAKLRIQ.

The protein belongs to the UvrB family. Forms a heterotetramer with UvrA during the search for lesions. Interacts with UvrC in an incision complex.

The protein resides in the cytoplasm. Functionally, the UvrABC repair system catalyzes the recognition and processing of DNA lesions. A damage recognition complex composed of 2 UvrA and 2 UvrB subunits scans DNA for abnormalities. Upon binding of the UvrA(2)B(2) complex to a putative damaged site, the DNA wraps around one UvrB monomer. DNA wrap is dependent on ATP binding by UvrB and probably causes local melting of the DNA helix, facilitating insertion of UvrB beta-hairpin between the DNA strands. Then UvrB probes one DNA strand for the presence of a lesion. If a lesion is found the UvrA subunits dissociate and the UvrB-DNA preincision complex is formed. This complex is subsequently bound by UvrC and the second UvrB is released. If no lesion is found, the DNA wraps around the other UvrB subunit that will check the other stand for damage. The protein is UvrABC system protein B of Colwellia psychrerythraea (strain 34H / ATCC BAA-681) (Vibrio psychroerythus).